A 534-amino-acid chain; its full sequence is Peptide chain release factor 3 (534 aa).

The 270-residue stretch at 9–278 (SRRRTFAIIS…FFVEHAPSPQ (270 aa)) folds into the tr-type G domain. GTP-binding positions include 18-25 (SHPDAGKT), 86-90 (DTPGH), and 140-143 (NKLD).

The protein belongs to the TRAFAC class translation factor GTPase superfamily. Classic translation factor GTPase family. PrfC subfamily.

It is found in the cytoplasm. Its function is as follows. Increases the formation of ribosomal termination complexes and stimulates activities of RF-1 and RF-2. It binds guanine nucleotides and has strong preference for UGA stop codons. It may interact directly with the ribosome. The stimulation of RF-1 and RF-2 is significantly reduced by GTP and GDP, but not by GMP. The chain is Peptide chain release factor 3 from Stenotrophomonas maltophilia (strain K279a).